The primary structure comprises 371 residues: Terpene cyclase 6 (371 aa).

Mg(2+)-binding residues include Asp144, Asn266, Ser270, and Glu274. Residues 144 to 148 (DDVME) carry the D(D/E)XX(D/E) motif motif. The NSE motif signature appears at 266 to 274 (NDLYSYDKE). The short motif at 352 to 359 (HHATLGRY) is the WxxxxxRY motif element. Residues Arg358 and Tyr359 each contribute to the (2E,6E)-farnesyl diphosphate site.

This sequence belongs to the terpene synthase family. As to quaternary structure, homodimer. Mg(2+) is required as a cofactor.

The enzyme catalyses (2E,6E)-farnesyl diphosphate + H2O = (-)-alpha-acorenol + diphosphate. The protein operates within sesquiterpene biosynthesis. Terpene cyclase that catalyzes the cyclization of farnesyl diphosphate (FPP) to the spirocyclic sesquiterpene alpha-acorenol. The chain is Terpene cyclase 6 from Gibberella fujikuroi (strain CBS 195.34 / IMI 58289 / NRRL A-6831) (Bakanae and foot rot disease fungus).